Here is a 649-residue protein sequence, read N- to C-terminus: UvrABC system protein B (649 aa).

Positions 25–178 (EHYKDGIKEQ…EDILKELVKM (154 aa)) constitute a Helicase ATP-binding domain. 38-45 (GVTGSGKT) is an ATP binding site. The Beta-hairpin motif lies at 91–114 (YYDYYQPEAYVAQTDTFIDKESAI). The Helicase C-terminal domain maps to 428–594 (QVDDLLGEIR…SVVRKLKDKK (167 aa)). In terms of domain architecture, UVR spans 614-649 (DEIIKELEKEMKQAAKDLNFEKAAKLRDRIMELKEE).

The protein belongs to the UvrB family. In terms of assembly, forms a heterotetramer with UvrA during the search for lesions. Interacts with UvrC in an incision complex.

It localises to the cytoplasm. Its function is as follows. The UvrABC repair system catalyzes the recognition and processing of DNA lesions. A damage recognition complex composed of 2 UvrA and 2 UvrB subunits scans DNA for abnormalities. Upon binding of the UvrA(2)B(2) complex to a putative damaged site, the DNA wraps around one UvrB monomer. DNA wrap is dependent on ATP binding by UvrB and probably causes local melting of the DNA helix, facilitating insertion of UvrB beta-hairpin between the DNA strands. Then UvrB probes one DNA strand for the presence of a lesion. If a lesion is found the UvrA subunits dissociate and the UvrB-DNA preincision complex is formed. This complex is subsequently bound by UvrC and the second UvrB is released. If no lesion is found, the DNA wraps around the other UvrB subunit that will check the other stand for damage. The protein is UvrABC system protein B of Methanosphaera stadtmanae (strain ATCC 43021 / DSM 3091 / JCM 11832 / MCB-3).